Here is a 71-residue protein sequence, read N- to C-terminus: DNA-directed RNA polymerase subunit omega (71 aa).

Belongs to the RNA polymerase subunit omega family. As to quaternary structure, the RNAP catalytic core consists of 2 alpha, 1 beta, 1 beta' and 1 omega subunit. When a sigma factor is associated with the core the holoenzyme is formed, which can initiate transcription.

It catalyses the reaction RNA(n) + a ribonucleoside 5'-triphosphate = RNA(n+1) + diphosphate. Functionally, promotes RNA polymerase assembly. Latches the N- and C-terminal regions of the beta' subunit thereby facilitating its interaction with the beta and alpha subunits. In Syntrophomonas wolfei subsp. wolfei (strain DSM 2245B / Goettingen), this protein is DNA-directed RNA polymerase subunit omega.